The following is a 1137-amino-acid chain: 2'-5'-oligoadenylate synthase 3 (1137 aa).

N-acetylmethionine is present on M1. Positions 6 to 341 (TPAGALDKLV…GALVQPWEGP (336 aa)) are OAS domain 1. 2 interaction with dsRNA regions span residues 12–56 (DKLV…VIRI) and 185–199 (ELRK…VKLK). Residues 342–461 (GLPCAGILDL…GSQMGPDLSQ (120 aa)) form a linker region. Positions 434 to 453 (QSTASSNTPPGHSSMSTAGS) are enriched in polar residues. The interval 434–462 (QSTASSNTPPGHSSMSTAGSQMGPDLSQI) is disordered. OAS domain regions lie at residues 462-792 (IPSK…PWDV) and 800-1134 (TPAQ…WPVK). S854 serves as a coordination point for ATP. Residues D866, D868, and D938 each coordinate Mg(2+). The ATP site is built by R997, K1000, and Q1019.

Belongs to the 2-5A synthase family. In terms of assembly, monomer. Requires Mg(2+) as cofactor.

The protein localises to the cytoplasm. Its subcellular location is the nucleus. The catalysed reaction is 3 ATP = 5'-triphosphoadenylyl-(2'-&gt;5')-adenylyl-(2'-&gt;5')-adenosine + 2 diphosphate. Produced as a latent enzyme which is activated by dsRNA generated during the course of viral infection. Strongly activated by long dsRNAs at least 50 nucleotides in length. ssRNA does not activate the enzyme. Interferon-induced, dsRNA-activated antiviral enzyme which plays a critical role in cellular innate antiviral response. In addition, it may also play a role in other cellular processes such as apoptosis, cell growth, differentiation and gene regulation. Synthesizes preferentially dimers of 2'-5'-oligoadenylates (2-5A) from ATP which then bind to the inactive monomeric form of ribonuclease L (RNase L) leading to its dimerization and subsequent activation. Activation of RNase L leads to degradation of cellular as well as viral RNA, resulting in the inhibition of protein synthesis, thus terminating viral replication. Can mediate the antiviral effect via the classical RNase L-dependent pathway or an alternative antiviral pathway independent of RNase L. In Rattus norvegicus (Rat), this protein is 2'-5'-oligoadenylate synthase 3 (Oas3).